We begin with the raw amino-acid sequence, 158 residues long: Deoxyuridine 5'-triphosphate nucleotidohydrolase (158 aa).

Substrate contacts are provided by residues 66–68 (RSG), asparagine 79, 83–85 (TID), and lysine 93. Residues 139 to 158 (RGFGSSGVARKGHYQGKPLA) form a disordered region.

This sequence belongs to the dUTPase family. It depends on Mg(2+) as a cofactor.

The enzyme catalyses dUTP + H2O = dUMP + diphosphate + H(+). It participates in pyrimidine metabolism; dUMP biosynthesis; dUMP from dCTP (dUTP route): step 2/2. Its function is as follows. This enzyme is involved in nucleotide metabolism: it produces dUMP, the immediate precursor of thymidine nucleotides and it decreases the intracellular concentration of dUTP so that uracil cannot be incorporated into DNA. This Helicobacter hepaticus (strain ATCC 51449 / 3B1) protein is Deoxyuridine 5'-triphosphate nucleotidohydrolase.